Here is a 132-residue protein sequence, read N- to C-terminus: Small ribosomal subunit protein uS8 (132 aa).

This sequence belongs to the universal ribosomal protein uS8 family. In terms of assembly, part of the 30S ribosomal subunit. Contacts proteins S5 and S12.

Its function is as follows. One of the primary rRNA binding proteins, it binds directly to 16S rRNA central domain where it helps coordinate assembly of the platform of the 30S subunit. This is Small ribosomal subunit protein uS8 from Alkaliphilus metalliredigens (strain QYMF).